Here is a 481-residue protein sequence, read N- to C-terminus: Pentatricopeptide repeat-containing protein At2g48000 (481 aa).

PPR repeat units follow at residues 147–181, 187–221, 222–256, 257–287, 292–324, 328–362, 364–398, 399–433, and 434–469; these read TTSVYNALMGAYLCNGLSHHCEQLFLDFNSQQDGP, SVSTYNILISLYGRLIMVERMESVFLQLQQLNILP, DSSTYNNLIAGYIYAWDWDKMEATFHSMKNGLVKP, TLATYLLMLRGYANSGNLLRMEDMYQAVKRH, EIKLIESMICAYYRSCHKDRIRKIKTLSKLIPK, KPWLYLLLMQVYAKDDNLHAMENFIDQAITKGLQI, TDGIMRSIVASYFRCNAVDKLAKFVQRANSAGWKM, SRSMFHGLMIMYGSQKRFKEMENVLSEMESFKISR, and SKKTLCILLRVYAATHGQEHKVNQVAGMMLKHGHDF.

This sequence belongs to the PPR family. P subfamily.

This chain is Pentatricopeptide repeat-containing protein At2g48000, found in Arabidopsis thaliana (Mouse-ear cress).